Reading from the N-terminus, the 351-residue chain is Photosystem II D2 protein (351 aa).

A helical membrane pass occupies residues 39–59 (CAFLALGGWLTGTTFVTSWYT). H116 serves as a coordination point for chlorophyll a. The chain crosses the membrane as a helical span at residues 123–139 (GFMLRQFEIARLVGIRP). Pheophytin a-binding residues include Q128 and N141. Residues 151 to 164 (VFVSVFLMYPLGQS) traverse the membrane as a helical segment. Residue H196 participates in chlorophyll a binding. A helical membrane pass occupies residues 206 to 226 (GALLCAIHGATVENTLFEDGE). Positions 213 and 260 each coordinate a plastoquinone. Fe cation is bound at residue H213. Fe cation is bound at residue H267. The chain crosses the membrane as a helical span at residues 277–293 (GLWMSAVGIVGLALNLR).

Belongs to the reaction center PufL/M/PsbA/D family. In terms of assembly, PSII is composed of 1 copy each of membrane proteins PsbA, PsbB, PsbC, PsbD, PsbE, PsbF, PsbH, PsbI, PsbJ, PsbK, PsbL, PsbM, PsbT, PsbX, PsbY, PsbZ, Psb30/Ycf12, peripheral proteins PsbO, CyanoQ (PsbQ), PsbU, PsbV and a large number of cofactors. It forms dimeric complexes. It depends on The D1/D2 heterodimer binds P680, chlorophylls that are the primary electron donor of PSII, and subsequent electron acceptors. It shares a non-heme iron and each subunit binds pheophytin, quinone, additional chlorophylls, carotenoids and lipids. There is also a Cl(-1) ion associated with D1 and D2, which is required for oxygen evolution. The PSII complex binds additional chlorophylls, carotenoids and specific lipids. as a cofactor.

The protein localises to the cellular thylakoid membrane. It carries out the reaction 2 a plastoquinone + 4 hnu + 2 H2O = 2 a plastoquinol + O2. Its function is as follows. Photosystem II (PSII) is a light-driven water:plastoquinone oxidoreductase that uses light energy to abstract electrons from H(2)O, generating O(2) and a proton gradient subsequently used for ATP formation. It consists of a core antenna complex that captures photons, and an electron transfer chain that converts photonic excitation into a charge separation. The D1/D2 (PsbA/PsbD) reaction center heterodimer binds P680, the primary electron donor of PSII as well as several subsequent electron acceptors. D2 is needed for assembly of a stable PSII complex. This chain is Photosystem II D2 protein, found in Nostoc sp. (strain PCC 7120 / SAG 25.82 / UTEX 2576).